Consider the following 340-residue polypeptide: Ketol-acid reductoisomerase (NADP(+)) (340 aa).

Residues 3-183 enclose the KARI N-terminal Rossmann domain; it reads LSVYYDKDCN…GGGRTGIIET (181 aa). Residues 26–29, Ser-54, and 84–87 contribute to the NADP(+) site; these read FGSQ and DELQ. His-109 is an active-site residue. NADP(+) is bound at residue Gly-135. The KARI C-terminal knotted domain maps to 184 to 329; the sequence is TFKDETETDL…ERLRAMMPWI (146 aa). Mg(2+) is bound by residues Asp-192, Glu-196, Glu-228, and Glu-232. Substrate is bound at residue Ser-253.

It belongs to the ketol-acid reductoisomerase family. Mg(2+) serves as cofactor.

The catalysed reaction is (2R)-2,3-dihydroxy-3-methylbutanoate + NADP(+) = (2S)-2-acetolactate + NADPH + H(+). It carries out the reaction (2R,3R)-2,3-dihydroxy-3-methylpentanoate + NADP(+) = (S)-2-ethyl-2-hydroxy-3-oxobutanoate + NADPH + H(+). It participates in amino-acid biosynthesis; L-isoleucine biosynthesis; L-isoleucine from 2-oxobutanoate: step 2/4. Its pathway is amino-acid biosynthesis; L-valine biosynthesis; L-valine from pyruvate: step 2/4. Involved in the biosynthesis of branched-chain amino acids (BCAA). Catalyzes an alkyl-migration followed by a ketol-acid reduction of (S)-2-acetolactate (S2AL) to yield (R)-2,3-dihydroxy-isovalerate. In the isomerase reaction, S2AL is rearranged via a Mg-dependent methyl migration to produce 3-hydroxy-3-methyl-2-ketobutyrate (HMKB). In the reductase reaction, this 2-ketoacid undergoes a metal-dependent reduction by NADPH to yield (R)-2,3-dihydroxy-isovalerate. This is Ketol-acid reductoisomerase (NADP(+)) from Wolinella succinogenes (strain ATCC 29543 / DSM 1740 / CCUG 13145 / JCM 31913 / LMG 7466 / NCTC 11488 / FDC 602W) (Vibrio succinogenes).